The chain runs to 328 residues: Purple acid phosphatase 7 (328 aa).

An N-terminal signal peptide occupies residues 1-24; that stretch reads MKMHVCFSVILMFLSIFFINGALS. A Fe cation-binding site is contributed by Asp48. A glycan (N-linked (GlcNAc...) asparagine) is linked at Asn56. Fe cation is bound by residues Asp81 and Tyr84. Asp81 contacts Zn(2+). Zn(2+) contacts are provided by Asn119 and His213. His222 acts as the Proton donor in catalysis. Residue His248 coordinates Zn(2+). 248 to 250 contacts substrate; that stretch reads HDH. His250 is a Fe cation binding site.

Belongs to the metallophosphoesterase superfamily. Purple acid phosphatase family. As to quaternary structure, homodimer. Requires Fe cation as cofactor. Zn(2+) is required as a cofactor. In terms of tissue distribution, expressed in roots, stems, leaves, flowers and siliques.

Its subcellular location is the secreted. It catalyses the reaction a phosphate monoester + H2O = an alcohol + phosphate. The chain is Purple acid phosphatase 7 (PAP7) from Arabidopsis thaliana (Mouse-ear cress).